A 206-amino-acid polypeptide reads, in one-letter code: Lipid A acyltransferase PagP (206 aa).

Residues 1–22 (MKQMVCWLTAGLLTLGGLPARA) form the signal peptide. Low complexity predominate over residues 26 to 46 (VPAVPETPAAPAAPAVQETPA). A disordered region spans residues 26 to 50 (VPAVPETPAAPAAPAVQETPASSAA). Catalysis depends on residues His80, Asp123, and Ser124.

This sequence belongs to the lipid A palmitoyltransferase family. In terms of assembly, homodimer.

The protein localises to the cell outer membrane. The catalysed reaction is a lipid A + a 1,2-diacyl-sn-glycero-3-phosphocholine = a hepta-acyl lipid A + a 2-acyl-sn-glycero-3-phosphocholine. The enzyme catalyses a lipid IVA + a 1,2-diacyl-sn-glycero-3-phosphocholine = a lipid IVB + a 2-acyl-sn-glycero-3-phosphocholine. It carries out the reaction a lipid IIA + a 1,2-diacyl-sn-glycero-3-phosphocholine = a lipid IIB + a 2-acyl-sn-glycero-3-phosphocholine. Transfers a fatty acid residue from the sn-1 position of a phospholipid to the N-linked hydroxyfatty acid chain on the proximal unit of lipid A or its precursors. The polypeptide is Lipid A acyltransferase PagP (Laribacter hongkongensis (strain HLHK9)).